The sequence spans 273 residues: Dermonecrotic toxin LdSicTox-alphaIB3avi (273 aa).

H5 is a catalytic residue. Positions 25 and 27 each coordinate Mg(2+). Catalysis depends on H41, which acts as the Nucleophile. Cystine bridges form between C45-C51 and C47-C190. D85 is a binding site for Mg(2+).

Belongs to the arthropod phospholipase D family. Class II subfamily. It depends on Mg(2+) as a cofactor. In terms of tissue distribution, expressed by the venom gland.

It is found in the secreted. It carries out the reaction an N-(acyl)-sphingosylphosphocholine = an N-(acyl)-sphingosyl-1,3-cyclic phosphate + choline. The enzyme catalyses an N-(acyl)-sphingosylphosphoethanolamine = an N-(acyl)-sphingosyl-1,3-cyclic phosphate + ethanolamine. The catalysed reaction is a 1-acyl-sn-glycero-3-phosphocholine = a 1-acyl-sn-glycero-2,3-cyclic phosphate + choline. It catalyses the reaction a 1-acyl-sn-glycero-3-phosphoethanolamine = a 1-acyl-sn-glycero-2,3-cyclic phosphate + ethanolamine. Its function is as follows. Dermonecrotic toxins cleave the phosphodiester linkage between the phosphate and headgroup of certain phospholipids (sphingolipid and lysolipid substrates), forming an alcohol (often choline) and a cyclic phosphate. This toxin acts on sphingomyelin (SM). It may also act on ceramide phosphoethanolamine (CPE), lysophosphatidylcholine (LPC) and lysophosphatidylethanolamine (LPE), but not on lysophosphatidylserine (LPS), and lysophosphatidylglycerol (LPG). It acts by transphosphatidylation, releasing exclusively cyclic phosphate products as second products. Induces dermonecrosis, hemolysis, increased vascular permeability, edema, inflammatory response, and platelet aggregation. This chain is Dermonecrotic toxin LdSicTox-alphaIB3avi, found in Loxosceles deserta (Desert recluse spider).